We begin with the raw amino-acid sequence, 274 residues long: Diaminopimelate epimerase (274 aa).

3 residues coordinate substrate: Asn-11, Gln-44, and Asn-64. Cys-73 (proton donor) is an active-site residue. Residues 74-75, Asn-157, Asn-190, and 208-209 each bind substrate; these read GN and ER. Catalysis depends on Cys-217, which acts as the Proton acceptor. 218–219 serves as a coordination point for substrate; sequence GS.

The protein belongs to the diaminopimelate epimerase family. As to quaternary structure, homodimer.

It localises to the cytoplasm. The catalysed reaction is (2S,6S)-2,6-diaminopimelate = meso-2,6-diaminopimelate. It participates in amino-acid biosynthesis; L-lysine biosynthesis via DAP pathway; DL-2,6-diaminopimelate from LL-2,6-diaminopimelate: step 1/1. In terms of biological role, catalyzes the stereoinversion of LL-2,6-diaminopimelate (L,L-DAP) to meso-diaminopimelate (meso-DAP), a precursor of L-lysine and an essential component of the bacterial peptidoglycan. This chain is Diaminopimelate epimerase, found in Shigella boydii serotype 18 (strain CDC 3083-94 / BS512).